A 544-amino-acid chain; its full sequence is Glucose-6-phosphate isomerase (544 aa).

The Proton donor role is filled by E354. Residues H385 and K510 contribute to the active site.

It belongs to the GPI family.

Its subcellular location is the cytoplasm. The catalysed reaction is alpha-D-glucose 6-phosphate = beta-D-fructose 6-phosphate. The protein operates within carbohydrate biosynthesis; gluconeogenesis. It functions in the pathway carbohydrate degradation; glycolysis; D-glyceraldehyde 3-phosphate and glycerone phosphate from D-glucose: step 2/4. Functionally, catalyzes the reversible isomerization of glucose-6-phosphate to fructose-6-phosphate. This Deinococcus deserti (strain DSM 17065 / CIP 109153 / LMG 22923 / VCD115) protein is Glucose-6-phosphate isomerase.